We begin with the raw amino-acid sequence, 94 residues long: Co-chaperonin GroES (94 aa).

The protein belongs to the GroES chaperonin family. As to quaternary structure, heptamer of 7 subunits arranged in a ring. Interacts with the chaperonin GroEL.

Its subcellular location is the cytoplasm. Together with the chaperonin GroEL, plays an essential role in assisting protein folding. The GroEL-GroES system forms a nano-cage that allows encapsulation of the non-native substrate proteins and provides a physical environment optimized to promote and accelerate protein folding. GroES binds to the apical surface of the GroEL ring, thereby capping the opening of the GroEL channel. This Ehrlichia canis (strain Jake) protein is Co-chaperonin GroES.